The sequence spans 220 residues: dTTP/UTP pyrophosphatase (220 aa).

Catalysis depends on Asp83, which acts as the Proton acceptor.

Belongs to the Maf family. YhdE subfamily. A divalent metal cation is required as a cofactor.

It localises to the cytoplasm. It catalyses the reaction dTTP + H2O = dTMP + diphosphate + H(+). The enzyme catalyses UTP + H2O = UMP + diphosphate + H(+). Functionally, nucleoside triphosphate pyrophosphatase that hydrolyzes dTTP and UTP. May have a dual role in cell division arrest and in preventing the incorporation of modified nucleotides into cellular nucleic acids. This is dTTP/UTP pyrophosphatase from Syntrophotalea carbinolica (strain DSM 2380 / NBRC 103641 / GraBd1) (Pelobacter carbinolicus).